The chain runs to 857 residues: Leucine-rich repeat extensin-like protein 5 (857 aa).

An N-terminal signal peptide occupies residues 1 to 31; the sequence is MKTKMMMKNTSLIFVLLFITFFFTSISYSLS. The stretch at 32–53 is one LRR 1 repeat; that stretch reads LTFNGDLSDNEVRLITQRQLLY. N98 is a glycosylation site (N-linked (GlcNAc...) asparagine). 10 LRR repeats span residues 125–149, 150–172, 174–197, 198–221, 223–244, 246–267, 268–291, 292–315, 316–339, and 341–362; these read IRTV…LGLL, TDLA…RFNR, KLLF…VLQL, PSLK…LFSK, LDAI…LGDS, VSVI…LGDM, RNLE…IGRL, KNVT…IGGM, VSME…ICQL, and RLEN…CLGL. The N-linked (GlcNAc...) asparagine glycan is linked to N293. A glycan (N-linked (GlcNAc...) asparagine) is linked at N344. Disordered stretches follow at residues 406–776 and 817–839; these read PPVV…EYSP and YSPP…YEGP. 2 stretches are compositionally biased toward pro residues: residues 408–571 and 579–768; these read VVVP…PTPI and PIIP…PQSH. The interval 615-857 is contains the Ser-Pro(4) repeats; the sequence is SPPPSTPTPV…YASPPPPPFY (243 aa).

Hydroxylated on proline residues in the S-P-P-P-P repeat. In terms of processing, O-glycosylated on hydroxyprolines. As to expression, expressed in roots, leaves and flowers.

The protein resides in the secreted. Its subcellular location is the cell wall. Its function is as follows. Modulates cell morphogenesis by regulating cell wall formation and assembly, and/or growth polarization. The chain is Leucine-rich repeat extensin-like protein 5 (LRX5) from Arabidopsis thaliana (Mouse-ear cress).